The following is a 416-amino-acid chain: Actin-like protein 9 (416 aa).

The segment at 1-23 (MDPNQGNPLEPQDSPEIPKPSLN) is disordered.

The protein belongs to the actin family. As to quaternary structure, interacts with ACTL7A.

It is found in the cytoplasmic vesicle. The protein localises to the secretory vesicle. It localises to the acrosome. The protein resides in the cytoplasm. Its subcellular location is the cytoskeleton. It is found in the perinuclear theca. Functionally, testis-specic protein that plays an important role in fusion of proacrosomal vesicles and perinuclear theca formation. The protein is Actin-like protein 9 (ACTL9) of Bos taurus (Bovine).